A 261-amino-acid chain; its full sequence is 14-3-3 protein 9 (261 aa).

The tract at residues 239-261 is disordered; the sequence is PEDAEDAQKGDATNKAGGGEDAE.

This sequence belongs to the 14-3-3 family. As to quaternary structure, homodimer.

In Solanum lycopersicum (Tomato), this protein is 14-3-3 protein 9 (TFT9).